The chain runs to 558 residues: MSLSKEVKSFQWTQALRRELQGFTSDVKAAVIKDATSLLNGLDFSEVSNVQRIMRKERRDDKDLQRLRSLNQTVHSLVDPKSTSKKNVLKVGRLSAEELMTLAADLEKLKAKIMRTERPQASGVYMGNLTAQQLDQRSQILQMVGMRRPQQGASGVVRVWDVKDSSLLNNQFGTMPSLTMACMAKQSQTPLNDVVQALTDLGLLYTVKYPNLSDLERLKDKHPVLGVITEQQSSINISGYNFSLGAAVKAGAALLHGGNMLESILIKPSNSEDLLKAVLGAKKKLNMFVSDQVGDRNPYENILYKVCLSGEGWPYIACRTSVVGRAWENTTIDLTNEKLVANSSRPVPGAAGPPQVGLSYSQTMLLKDLMGGIDPNAPTWIDIEGRFNDPVEIAIFQPQNGQFIHFYREPTDQKQFKQDSKYSHGMDLADLFNAQAGLTSSVIGALPQGMVLSCQGSDDIRKLLDSQNRRDIKLIDVEMTKEASREYEDKVWDKYGWLCKMHTGVVRDKKKKEITPHCALMDCIIFESASKARLPDLKTVHNILPHDLIFRGPNVVTL.

The interval 54 to 237 is binding site for the cap structure m7GTP; sequence MRKERRDDKD…ITEQQSSINI (184 aa). The Mn(2+) site is built by D382 and E384. Zn(2+) contacts are provided by E392, C499, H502, and C518. A Mn(2+)-binding site is contributed by D522.

This sequence belongs to the arenaviridae nucleocapsid protein family. Homomultimerizes to form the nucleocapsid. Binds to viral genomic RNA. Interacts with glycoprotein G2. Interacts with protein Z; this interaction probably directs the encapsidated genome to budding sites. Interacts with protein L; this interaction does not interfere with Z-L interaction. Interacts with host IKBKE (via Protein kinase domain); the interaction inhibits IKBKE kinase activity.

The protein resides in the virion. Its subcellular location is the host cytoplasm. Encapsidates the genome, protecting it from nucleases. The encapsidated genomic RNA is termed the nucleocapsid (NC). Serves as template for viral transcription and replication. The increased presence of protein N in host cell does not seem to trigger the switch from transcription to replication as observed in other negative strain RNA viruses. Through the interaction with host IKBKE, strongly inhibits the phosphorylation and nuclear translocation of host IRF3, a protein involved in interferon activation pathway, leading to the inhibition of interferon-beta and IRF3-dependent promoters activation. Also encodes a functional 3'-5' exoribonuclease that degrades preferentially dsRNA substrates and thereby participates in the suppression of interferon induction. This is Nucleoprotein from Lymphocytic choriomeningitis virus (strain WE) (LCMV).